The sequence spans 154 residues: MALLLSVLRVLLGGFFALVGLAKLSEEISAPVSERMNALFVQFAEVFPLKVFGYQPDPLNYQIAVGFLELLAGLLLVMGPPMLQEISNLFLILLMMGAIFTLAALKESLSTCIPAIVCLGFLLLLNVGQLLAQTKKVVRPTRKKTLSTFKESWK.

A signal peptide spans 1–22 (MALLLSVLRVLLGGFFALVGLA). 3 helical membrane passes run 63–83 (IAVGFLELLAGLLLVMGPPML), 85–105 (EISNLFLILLMMGAIFTLAAL), and 112–132 (CIPAIVCLGFLLLLNVGQLLA).

This sequence belongs to the DoxX family.

It is found in the membrane. This is Transmembrane protein 35B from Homo sapiens (Human).